Reading from the N-terminus, the 270-residue chain is Glutamate racemase (270 aa).

Substrate is bound by residues 14–15 (DS) and 46–47 (YG). Cysteine 77 acts as the Proton donor/acceptor in catalysis. 78 to 79 (NT) provides a ligand contact to substrate. The active-site Proton donor/acceptor is cysteine 189. 190-191 (TH) contributes to the substrate binding site.

This sequence belongs to the aspartate/glutamate racemases family.

The enzyme catalyses L-glutamate = D-glutamate. Its pathway is cell wall biogenesis; peptidoglycan biosynthesis. Its function is as follows. Provides the (R)-glutamate required for cell wall biosynthesis. In Neisseria meningitidis serogroup C, this protein is Glutamate racemase.